Here is a 472-residue protein sequence, read N- to C-terminus: ATP synthase subunit beta (472 aa).

Glycine 156–threonine 163 contributes to the ATP binding site.

Belongs to the ATPase alpha/beta chains family. As to quaternary structure, F-type ATPases have 2 components, CF(1) - the catalytic core - and CF(0) - the membrane proton channel. CF(1) has five subunits: alpha(3), beta(3), gamma(1), delta(1), epsilon(1). CF(0) has three main subunits: a(1), b(2) and c(9-12). The alpha and beta chains form an alternating ring which encloses part of the gamma chain. CF(1) is attached to CF(0) by a central stalk formed by the gamma and epsilon chains, while a peripheral stalk is formed by the delta and b chains.

Its subcellular location is the cell membrane. It carries out the reaction ATP + H2O + 4 H(+)(in) = ADP + phosphate + 5 H(+)(out). Produces ATP from ADP in the presence of a proton gradient across the membrane. The catalytic sites are hosted primarily by the beta subunits. This is ATP synthase subunit beta from Symbiobacterium thermophilum (strain DSM 24528 / JCM 14929 / IAM 14863 / T).